A 499-amino-acid polypeptide reads, in one-letter code: Maturase K (499 aa).

Belongs to the intron maturase 2 family. MatK subfamily.

The protein localises to the plastid. It is found in the chloroplast. Its function is as follows. Usually encoded in the trnK tRNA gene intron. Probably assists in splicing its own and other chloroplast group II introns. The chain is Maturase K from Macrozamia communis (Burrawang palm).